The chain runs to 358 residues: Peptide chain release factor 1 (358 aa).

Gln-236 is modified (N5-methylglutamine).

This sequence belongs to the prokaryotic/mitochondrial release factor family. Methylated by PrmC. Methylation increases the termination efficiency of RF1.

The protein resides in the cytoplasm. Its function is as follows. Peptide chain release factor 1 directs the termination of translation in response to the peptide chain termination codons UAG and UAA. This chain is Peptide chain release factor 1, found in Corynebacterium glutamicum (strain ATCC 13032 / DSM 20300 / JCM 1318 / BCRC 11384 / CCUG 27702 / LMG 3730 / NBRC 12168 / NCIMB 10025 / NRRL B-2784 / 534).